The chain runs to 249 residues: Ribonuclease HII (249 aa).

One can recognise an RNase H type-2 domain in the interval 30–221 (GPVAGVDEVG…VRRLVMDGEP (192 aa)). A divalent metal cation contacts are provided by D36, E37, and D130.

Belongs to the RNase HII family. Mn(2+) serves as cofactor. Requires Mg(2+) as cofactor.

It is found in the cytoplasm. The enzyme catalyses Endonucleolytic cleavage to 5'-phosphomonoester.. Its function is as follows. Endonuclease that specifically degrades the RNA of RNA-DNA hybrids. This Mycolicibacterium vanbaalenii (strain DSM 7251 / JCM 13017 / BCRC 16820 / KCTC 9966 / NRRL B-24157 / PYR-1) (Mycobacterium vanbaalenii) protein is Ribonuclease HII.